A 291-amino-acid chain; its full sequence is 33 kDa chaperonin (291 aa).

Intrachain disulfides connect C229/C231 and C262/C265.

The protein belongs to the HSP33 family. Under oxidizing conditions two disulfide bonds are formed involving the reactive cysteines. Under reducing conditions zinc is bound to the reactive cysteines and the protein is inactive.

It is found in the cytoplasm. Redox regulated molecular chaperone. Protects both thermally unfolding and oxidatively damaged proteins from irreversible aggregation. Plays an important role in the bacterial defense system toward oxidative stress. The chain is 33 kDa chaperonin from Vibrio cholerae serotype O1 (strain ATCC 39315 / El Tor Inaba N16961).